The primary structure comprises 320 residues: Sucrose operon repressor (320 aa).

One can recognise an HTH lacI-type domain in the interval 1-57 (MVAKLTDVAKLAGVSPTTVSRVINRKGYLSEKTITKVQAAMKTLGYKPNNLARSLQG). Residues 5–24 (LTDVAKLAGVSPTTVSRVIN) constitute a DNA-binding region (H-T-H motif).

Functionally, negative regulator of scrB expression. This Streptococcus mutans serotype c (strain ATCC 700610 / UA159) protein is Sucrose operon repressor (scrR).